The primary structure comprises 68 residues: MAFGDAWKQLSWFYYQYLLVTALYMLEPWERTIFNSLLISVAAMAVYTGYVFMPQHIMAILHYFEVVQ.

Residues 1–9 are Cytoplasmic-facing; the sequence is MAFGDAWKQ. The helical transmembrane segment at 10–26 threads the bilayer; that stretch reads LSWFYYQYLLVTALYML. The Lumenal portion of the chain corresponds to 27-31; it reads EPWER. A helical membrane pass occupies residues 32–54; the sequence is TIFNSLLISVAAMAVYTGYVFMP. Over 55–68 the chain is Cytoplasmic; it reads QHIMAILHYFEVVQ.

Belongs to the SPTSS family. SPTSSA subfamily. In terms of assembly, component of the serine palmitoyltransferase (SPT) complex, which is composed of SPTLC1, SPTLC2 or SPTLC3 and SPTSSA or SPTSSB. The heterodimer consisting of SPTLC1 and SPTLC2/SPTLC3 forms the catalytic core of the enzyme, while SPTSSA or SPTSSB subunits determine substrate specificity. SPT also interacts with ORMDL proteins, especially ORMDL3, which negatively regulate SPT activity in the presence of ceramides.

It localises to the endoplasmic reticulum membrane. The protein operates within lipid metabolism; sphingolipid metabolism. Component of the serine palmitoyltransferase multisubunit enzyme (SPT) that catalyzes the initial and rate-limiting step in sphingolipid biosynthesis by condensing L-serine and activated acyl-CoA (most commonly palmitoyl-CoA) to form long-chain bases. The SPT complex is composed of SPTLC1, SPTLC2 or SPTLC3 and SPTSSA or SPTSSB. Within this complex, the heterodimer consisting of SPTLC1 and SPTLC2/SPTLC3 forms the catalytic core. Within the SPT complex, SPTSSA stimulates the catalytic activity and plays a role in substrate specificity, which depends upon the overall complex composition. The SPTLC1-SPTLC2-SPTSSA complex shows a strong preference for C16-CoA substrate, while the SPTLC1-SPTLC3-SPTSSA isozyme uses both C14-CoA and C16-CoA as substrates, with a slight preference for C14-CoA. Independently of its action as a SPT component, may be involved in MBOAT7 localization to mitochondria-associated membranes, a membrane bridge between the endoplasmic reticulum and mitochondria, may hence affect MBOAT7-catalyzed incorporation of arachidonic acid into phosphatidylinositol. The chain is Serine palmitoyltransferase small subunit A (sptssa) from Danio rerio (Zebrafish).